The following is a 477-amino-acid chain: Glycogen synthase (477 aa).

Lysine 15 contacts ADP-alpha-D-glucose.

This sequence belongs to the glycosyltransferase 1 family. Bacterial/plant glycogen synthase subfamily.

The catalysed reaction is [(1-&gt;4)-alpha-D-glucosyl](n) + ADP-alpha-D-glucose = [(1-&gt;4)-alpha-D-glucosyl](n+1) + ADP + H(+). Its pathway is glycan biosynthesis; glycogen biosynthesis. In terms of biological role, synthesizes alpha-1,4-glucan chains using ADP-glucose. The polypeptide is Glycogen synthase (Anaeromyxobacter dehalogenans (strain 2CP-1 / ATCC BAA-258)).